The chain runs to 438 residues: Coenzyme A disulfide reductase (438 aa).

8 to 33 (GAVAGGATCASQIRRLDKESDIIIFE) is an FAD binding site. 5 residues coordinate substrate: Thr-15, Gln-19, Arg-22, Ser-39, and Asn-42. Cys-43 (nucleophile) is an active-site residue. The active-site Redox-active is the Cys-43. A substrate-binding site is contributed by Lys-71. Residue 151–166 (VLVVGAGYVSLEVLEN) coordinates NADP(+). 267-277 (TNVPNIYVIGD) provides a ligand contact to FAD. A substrate-binding site is contributed by His-299. Residue Tyr-419 coordinates FAD. Lys-427 provides a ligand contact to substrate.

This sequence belongs to the class-III pyridine nucleotide-disulfide oxidoreductase family. In terms of assembly, homodimer. Requires FAD as cofactor.

It catalyses the reaction NADP(+) + 2 CoA = CoA-disulfide + NADPH + H(+). Its function is as follows. Catalyzes specifically the NADPH-dependent reduction of coenzyme A disulfide. The sequence is that of Coenzyme A disulfide reductase from Staphylococcus aureus (strain MRSA252).